A 136-amino-acid chain; its full sequence is Putative pre-16S rRNA nuclease (136 aa).

The protein belongs to the YqgF nuclease family.

The protein localises to the cytoplasm. Could be a nuclease involved in processing of the 5'-end of pre-16S rRNA. This Francisella tularensis subsp. holarctica (strain FTNF002-00 / FTA) protein is Putative pre-16S rRNA nuclease.